A 262-amino-acid chain; its full sequence is Acyl-[acyl-carrier-protein]--UDP-N-acetylglucosamine O-acyltransferase (262 aa).

The protein belongs to the transferase hexapeptide repeat family. LpxA subfamily. In terms of assembly, homotrimer.

Its subcellular location is the cytoplasm. The enzyme catalyses a (3R)-hydroxyacyl-[ACP] + UDP-N-acetyl-alpha-D-glucosamine = a UDP-3-O-[(3R)-3-hydroxyacyl]-N-acetyl-alpha-D-glucosamine + holo-[ACP]. Its pathway is glycolipid biosynthesis; lipid IV(A) biosynthesis; lipid IV(A) from (3R)-3-hydroxytetradecanoyl-[acyl-carrier-protein] and UDP-N-acetyl-alpha-D-glucosamine: step 1/6. In terms of biological role, involved in the biosynthesis of lipid A, a phosphorylated glycolipid that anchors the lipopolysaccharide to the outer membrane of the cell. This chain is Acyl-[acyl-carrier-protein]--UDP-N-acetylglucosamine O-acyltransferase, found in Sodalis glossinidius (strain morsitans).